Reading from the N-terminus, the 138-residue chain is MAPKKPGAAGPKKAQKTRRREKKNVPHGAAHIKSTFNNTIVSITDPQGNVISWASSGHVGFKGSRKSTPFAAQLAAENAARKAQEHGVKKVDVFVKGPGSGRETAIRSLQAAGLEVGAISDVTPQPHNGCRPPKRRRV.

Residues 1-12 (MAPKKPGAAGPK) are compositionally biased toward low complexity. Disordered regions lie at residues 1-27 (MAPKKPGAAGPKKAQKTRRREKKNVPH) and 119-138 (ISDVTPQPHNGCRPPKRRRV). Positions 13–22 (KAQKTRRREK) are enriched in basic residues.

Belongs to the universal ribosomal protein uS11 family. As to quaternary structure, part of the 30S ribosomal subunit. Interacts with proteins S7 and S18. Binds to IF-3.

In terms of biological role, located on the platform of the 30S subunit, it bridges several disparate RNA helices of the 16S rRNA. Forms part of the Shine-Dalgarno cleft in the 70S ribosome. The protein is Small ribosomal subunit protein uS11 of Mycobacteroides abscessus (strain ATCC 19977 / DSM 44196 / CCUG 20993 / CIP 104536 / JCM 13569 / NCTC 13031 / TMC 1543 / L948) (Mycobacterium abscessus).